The following is a 269-amino-acid chain: Surfeit locus protein 4 (269 aa).

The next 5 helical transmembrane spans lie at 64 to 84 (FLATCFVIINLIGQIGGCVLV), 92 to 112 (YACFGLFCIIALQTVAYSILW), 179 to 199 (FFSILQNMVGTALIILVAVGF), 203 to 223 (LAALTLVVWLLAINVYFNAFW), and 242 to 262 (TTSVIGGLLLVVALGPGGVSM). Residues 266-269 (KKEW) carry the Di-lysine motif motif.

It belongs to the SURF4 family.

Its subcellular location is the endoplasmic reticulum membrane. It is found in the endoplasmic reticulum-Golgi intermediate compartment membrane. It localises to the golgi apparatus membrane. Its function is as follows. Endoplasmic reticulum cargo receptor that mediates the export of lipoproteins by recruiting cargos into COPII vesicles to facilitate their secretion. The sequence is that of Surfeit locus protein 4 from Danio rerio (Zebrafish).